The chain runs to 142 residues: Large ribosomal subunit protein uL13 (142 aa).

The protein belongs to the universal ribosomal protein uL13 family. In terms of assembly, part of the 50S ribosomal subunit.

Its function is as follows. This protein is one of the early assembly proteins of the 50S ribosomal subunit, although it is not seen to bind rRNA by itself. It is important during the early stages of 50S assembly. The polypeptide is Large ribosomal subunit protein uL13 (Francisella philomiragia subsp. philomiragia (strain ATCC 25017 / CCUG 19701 / FSC 153 / O#319-036)).